A 561-amino-acid polypeptide reads, in one-letter code: DNA ligase B (561 aa).

The active-site N6-AMP-lysine intermediate is the Lys124.

This sequence belongs to the NAD-dependent DNA ligase family. LigB subfamily.

The enzyme catalyses NAD(+) + (deoxyribonucleotide)n-3'-hydroxyl + 5'-phospho-(deoxyribonucleotide)m = (deoxyribonucleotide)n+m + AMP + beta-nicotinamide D-nucleotide.. Functionally, catalyzes the formation of phosphodiester linkages between 5'-phosphoryl and 3'-hydroxyl groups in double-stranded DNA using NAD as a coenzyme and as the energy source for the reaction. The protein is DNA ligase B of Cronobacter sakazakii (strain ATCC BAA-894) (Enterobacter sakazakii).